A 91-amino-acid polypeptide reads, in one-letter code: ATP-dependent Clp protease adapter protein ClpS (91 aa).

Belongs to the ClpS family. As to quaternary structure, binds to the N-terminal domain of the chaperone ClpA.

Involved in the modulation of the specificity of the ClpAP-mediated ATP-dependent protein degradation. This is ATP-dependent Clp protease adapter protein ClpS from Helicobacter pylori (strain ATCC 700392 / 26695) (Campylobacter pylori).